The following is a 358-amino-acid chain: Putative ankyrin repeat protein FPV242 (358 aa).

ANK repeat units follow at residues 6-35 (NNYRKLRKAIINEDIEEIKYIIEKDPNMIV), 40-69 (NNHTLLHIAIMYRKVNAVKVLLDKGDNLVY), 91-118 (TRRNKISNALEKINNHKKIIEALVDKGV), 119-147 (ELTGLEIALSCKNIWLIKFLIEKGISVEY), 149-177 (GFFPVGVNYNTIDIDICKVLLENKIDINK), 180-209 (CGETLVRYAIRSSDLNLLKYLISKGADIEK), 214-243 (EQDPNIIEAVEKGNLGIVEYLIDNGISIDT), 248-277 (NHKPAIYYAILAGHYNMVDLLLRRGANPFI), 280-312 (EGNTSLISVATQAKRNRLKLINLLLKYGVRLPG), and 316-345 (YYIQPILLDYSYETYNIIHILLEHGLRITS).

The sequence is that of Putative ankyrin repeat protein FPV242 from Fowlpox virus (strain NVSL) (FPV).